A 428-amino-acid polypeptide reads, in one-letter code: Nocturnin (428 aa).

A mitochondrion-targeting transit peptide spans Met-1–Tyr-72. A disordered region spans residues Arg-21 to Asn-66. The span at Ser-39–Arg-55 shows a compositional bias: low complexity. Glu-192 serves as a coordination point for Mg(2+). Substrate-binding positions include Glu-192, Lys-216 to Trp-218, Asn-260, His-283 to Ala-286, and Asp-321 to Asn-323. The interaction with PPARG stretch occupies residues Asn-340–Pro-350. His-411 provides a ligand contact to substrate.

This sequence belongs to the CCR4/nocturin family. Interacts with PPARG. Requires Mg(2+) as cofactor.

The protein resides in the cytoplasm. It is found in the nucleus. The protein localises to the perinuclear region. It localises to the mitochondrion. It catalyses the reaction NADP(+) + H2O = phosphate + NAD(+). It carries out the reaction NADPH + H2O = phosphate + NADH. Functionally, phosphatase which catalyzes the conversion of NADP(+) to NAD(+) and of NADPH to NADH. Shows a small preference for NADPH over NADP(+). Represses translation and promotes degradation of target mRNA molecules. Plays an important role in post-transcriptional regulation of metabolic genes under circadian control. Exerts a rhythmic post-transcriptional control of genes necessary for metabolic functions including nutrient absorption, glucose/insulin sensitivity, lipid metabolism, adipogenesis, inflammation and osteogenesis. Plays an important role in favoring adipogenesis over osteoblastogenesis and acts as a key regulator of the adipogenesis/osteogenesis balance. Promotes adipogenesis by facilitating PPARG nuclear translocation which activates its transcriptional activity. Regulates circadian expression of NOS2 in the liver and negatively regulates the circadian expression of IGF1 in the bone. Critical for proper development of early embryos. This chain is Nocturnin, found in Rattus norvegicus (Rat).